Consider the following 159-residue polypeptide: Photosystem I reaction center subunit XI (159 aa).

Transmembrane regions (helical) follow at residues 53-73 (LEIGMAHGYFLIGPWVKLGPL), 84-104 (LISGIALILIATACLAAYGIV), and 125-145 (FTAGFFVGATGGAFVAFTLLE).

The protein belongs to the PsaL family.

The protein localises to the cellular thylakoid membrane. The sequence is that of Photosystem I reaction center subunit XI from Cyanothece sp. (strain PCC 7425 / ATCC 29141).